The sequence spans 478 residues: tRNA-2-methylthio-N(6)-dimethylallyladenosine synthase (478 aa).

The region spanning 39 to 157 is the MTTase N-terminal domain; the sequence is KLVFTQTFGC…FPQLLTESIN (119 aa). Residues Cys-48, Cys-84, Cys-118, Cys-194, Cys-198, and Cys-201 each contribute to the [4Fe-4S] cluster site. Positions 180–410 constitute a Radical SAM core domain; that stretch reads RKFELKAFVN…LEAVNRISAE (231 aa). In terms of domain architecture, TRAM spans 410-477; it reads EINDGYKDRI…TFSLNGILVN (68 aa).

The protein belongs to the methylthiotransferase family. MiaB subfamily. Monomer. It depends on [4Fe-4S] cluster as a cofactor.

The protein resides in the cytoplasm. It catalyses the reaction N(6)-dimethylallyladenosine(37) in tRNA + (sulfur carrier)-SH + AH2 + 2 S-adenosyl-L-methionine = 2-methylsulfanyl-N(6)-dimethylallyladenosine(37) in tRNA + (sulfur carrier)-H + 5'-deoxyadenosine + L-methionine + A + S-adenosyl-L-homocysteine + 2 H(+). Functionally, catalyzes the methylthiolation of N6-(dimethylallyl)adenosine (i(6)A), leading to the formation of 2-methylthio-N6-(dimethylallyl)adenosine (ms(2)i(6)A) at position 37 in tRNAs that read codons beginning with uridine. The polypeptide is tRNA-2-methylthio-N(6)-dimethylallyladenosine synthase (Clostridioides difficile (strain 630) (Peptoclostridium difficile)).